The primary structure comprises 164 residues: UPF0303 protein RHECIAT_CH0003058 (164 aa).

It belongs to the UPF0303 family.

The protein is UPF0303 protein RHECIAT_CH0003058 of Rhizobium etli (strain CIAT 652).